An 89-amino-acid chain; its full sequence is MANSAQAKKRARQNVKARKHNASLRSMVRTYIKRTVNAIAAGDYTVATEAYKKAVPVIDRMADKGIIHKNKAARHKSRLNAQVKALASN.

Positions 1-21 (MANSAQAKKRARQNVKARKHN) are disordered. Residues 7-21 (AKKRARQNVKARKHN) are compositionally biased toward basic residues.

Belongs to the bacterial ribosomal protein bS20 family.

Binds directly to 16S ribosomal RNA. The protein is Small ribosomal subunit protein bS20 of Acinetobacter baylyi (strain ATCC 33305 / BD413 / ADP1).